Reading from the N-terminus, the 431-residue chain is Trigger factor (431 aa).

Residues 161–246 (DDRVTIDFVG…LKKVENIVLP (86 aa)) enclose the PPIase FKBP-type domain.

This sequence belongs to the FKBP-type PPIase family. Tig subfamily.

It localises to the cytoplasm. It carries out the reaction [protein]-peptidylproline (omega=180) = [protein]-peptidylproline (omega=0). In terms of biological role, involved in protein export. Acts as a chaperone by maintaining the newly synthesized protein in an open conformation. Functions as a peptidyl-prolyl cis-trans isomerase. In Glaesserella parasuis serovar 5 (strain SH0165) (Haemophilus parasuis), this protein is Trigger factor.